Consider the following 478-residue polypeptide: GTPase Obg (478 aa).

The region spanning 2-159 (TTFVDRVELH…QDIHLELKTV (158 aa)) is the Obg domain. The segment at 60–88 (YHHSPHRKATNGKPGEGGNRSGKDGQDLV) is disordered. The OBG-type G domain occupies 160-330 (ADVALVGYPS…LSFALAELVA (171 aa)). GTP is bound by residues 166–173 (GYPSAGKS), 191–195 (FTTLV), 212–215 (DVPG), 282–285 (NKID), and 311–313 (SAV). Residues Ser173 and Thr193 each coordinate Mg(2+). Positions 348–430 (PKAVDDAGFT…DNAVVFDWEP (83 aa)) constitute an OCT domain. Residues 438 to 478 (MLGRRGEDHRFEAPRPAAQRRRDRDAERDEAQQEFDGFEPF) form a disordered region. Basic and acidic residues-rich tracts occupy residues 439 to 450 (LGRRGEDHRFEA) and 457 to 468 (RRRDRDAERDEA). Residues 469–478 (QQEFDGFEPF) are compositionally biased toward acidic residues.

Belongs to the TRAFAC class OBG-HflX-like GTPase superfamily. OBG GTPase family. As to quaternary structure, monomer. Requires Mg(2+) as cofactor.

It is found in the cytoplasm. The protein resides in the cell membrane. Its function is as follows. Plays an unknown essential role and a regulatory role in sporulation. Overexpression suppresses sporulation although cell growth rate was not reduced. Impaired differentiation was eliminated by addition of decoyinine, an inhibitor of GMP synthesis. Overexpression has no effect on undecylprodigiosin production, but decreases actinorhodin production. Functionally, an essential GTPase which binds GTP, GDP and possibly (p)ppGpp with moderate affinity, with high nucleotide exchange rates and a fairly low GTP hydrolysis rate. Plays a role in control of the cell cycle, stress response, ribosome biogenesis and in those bacteria that undergo differentiation, in morphogenesis control. This Streptomyces coelicolor (strain ATCC BAA-471 / A3(2) / M145) protein is GTPase Obg.